Consider the following 300-residue polypeptide: 33 kDa chaperonin (300 aa).

Cystine bridges form between cysteine 235–cysteine 237 and cysteine 269–cysteine 272.

Belongs to the HSP33 family. Post-translationally, under oxidizing conditions two disulfide bonds are formed involving the reactive cysteines. Under reducing conditions zinc is bound to the reactive cysteines and the protein is inactive.

The protein localises to the cytoplasm. Functionally, redox regulated molecular chaperone. Protects both thermally unfolding and oxidatively damaged proteins from irreversible aggregation. Plays an important role in the bacterial defense system toward oxidative stress. This chain is 33 kDa chaperonin, found in Pseudomonas savastanoi pv. phaseolicola (strain 1448A / Race 6) (Pseudomonas syringae pv. phaseolicola (strain 1448A / Race 6)).